The primary structure comprises 272 residues: Phosphate import ATP-binding protein PstB (272 aa).

Residues 26-267 enclose the ABC transporter domain; it reads LDIKNLDLYY…PSEKQTEDYI (242 aa). 58-65 lines the ATP pocket; the sequence is GPSGCGKS.

The protein belongs to the ABC transporter superfamily. Phosphate importer (TC 3.A.1.7) family. As to quaternary structure, the complex is composed of two ATP-binding proteins (PstB), two transmembrane proteins (PstC and PstA) and a solute-binding protein (PstS).

The protein resides in the cell inner membrane. The catalysed reaction is phosphate(out) + ATP + H2O = ADP + 2 phosphate(in) + H(+). Part of the ABC transporter complex PstSACB involved in phosphate import. Responsible for energy coupling to the transport system. The protein is Phosphate import ATP-binding protein PstB of Idiomarina loihiensis (strain ATCC BAA-735 / DSM 15497 / L2-TR).